Here is a 101-residue protein sequence, read N- to C-terminus: Ubiquitin-related modifier 1 homolog (101 aa).

G101 is subject to 1-thioglycine. Residue G101 forms a Glycyl lysine isopeptide (Gly-Lys) (interchain with K-? in acceptor proteins) linkage.

This sequence belongs to the URM1 family. In terms of assembly, interacts with cer. In terms of processing, C-terminal thiocarboxylation occurs in 2 steps, it is first acyl-adenylated (-COAMP) via the hesA/moeB/thiF part of the MOCS3 homolog, then thiocarboxylated (-COSH) via the rhodanese domain of the MOCS3 homolog.

Its subcellular location is the cytoplasm. It participates in tRNA modification; 5-methoxycarbonylmethyl-2-thiouridine-tRNA biosynthesis. Functionally, acts as a sulfur carrier required for 2-thiolation of mcm(5)S(2)U at tRNA wobble positions of cytosolic tRNA(Lys), tRNA(Glu) and tRNA(Gln). Serves as sulfur donor in tRNA 2-thiolation reaction by being thiocarboxylated (-COSH) at its C-terminus by MOCS3. The sulfur is then transferred to tRNA to form 2-thiolation of mcm(5)S(2)U. Also acts as a ubiquitin-like protein (UBL) that is covalently conjugated via an isopeptide bond to lysine residues of target proteins such as Prx2/Jafrac1, Ciao1, Eip71CD and GILT1. The thiocarboxylated form serves as substrate for conjugation and oxidative stress specifically induces the formation of UBL-protein conjugates. The chain is Ubiquitin-related modifier 1 homolog from Drosophila simulans (Fruit fly).